We begin with the raw amino-acid sequence, 137 residues long: Small ribosomal subunit protein uS9 (137 aa).

The disordered stretch occupies residues 105–137 (LKTEGYLKRDPRAVERKKYGLRKARKAPQYSKR). The span at 109 to 122 (GYLKRDPRAVERKK) shows a compositional bias: basic and acidic residues. The segment covering 123-137 (YGLRKARKAPQYSKR) has biased composition (basic residues).

The protein belongs to the universal ribosomal protein uS9 family.

This is Small ribosomal subunit protein uS9 from Synechococcus sp. (strain JA-3-3Ab) (Cyanobacteria bacterium Yellowstone A-Prime).